The chain runs to 361 residues: Serine/threonine-protein kinase SRK2B (361 aa).

A Protein kinase domain is found at 4–260 (YELVKDIGAG…IGDIKKHPWF (257 aa)). Residues 10–18 (IGAGNFGVA) and Lys-33 contribute to the ATP site. Catalysis depends on Asp-123, which acts as the Proton acceptor. Ser-154 is modified (phosphoserine). The interval 311–361 (AFGWGGGEDAEGKEEDAEEEVEEVEEEEDEEDEYDKTVKQVHASMGEVRVS) is disordered. The span at 318-344 (EDAEGKEEDAEEEVEEVEEEEDEEDEY) shows a compositional bias: acidic residues.

Belongs to the protein kinase superfamily. Ser/Thr protein kinase family. Expressed in seedlings.

The enzyme catalyses L-seryl-[protein] + ATP = O-phospho-L-seryl-[protein] + ADP + H(+). The catalysed reaction is L-threonyl-[protein] + ATP = O-phospho-L-threonyl-[protein] + ADP + H(+). The protein is Serine/threonine-protein kinase SRK2B (SRK2B) of Arabidopsis thaliana (Mouse-ear cress).